Consider the following 369-residue polypeptide: Nuclear pore complex-interacting protein family member A6 (369 aa).

A disordered region spans residues 151 to 170; that stretch reads SMKEREHGEKERQVSEAEEN.

Belongs to the NPIP family.

This is Nuclear pore complex-interacting protein family member A6 from Homo sapiens (Human).